The chain runs to 185 residues: Superoxide dismutase [Cu-Zn] (185 aa).

The N-terminal stretch at 1–18 is a signal peptide; sequence MTAFYKLCGMSMLSLVLA. Residues histidine 85, histidine 87, and histidine 102 each contribute to the Cu cation site. A disulfide bridge connects residues cysteine 92 and cysteine 180. Zn(2+) is bound by residues histidine 102, histidine 111, histidine 120, and aspartate 123. Histidine 158 provides a ligand contact to Cu cation.

It belongs to the Cu-Zn superoxide dismutase family. In terms of assembly, homodimer. It depends on Cu cation as a cofactor. Zn(2+) is required as a cofactor.

The protein resides in the periplasm. It carries out the reaction 2 superoxide + 2 H(+) = H2O2 + O2. Functionally, destroys radicals which are normally produced within the cells and which are toxic to biological systems. The polypeptide is Superoxide dismutase [Cu-Zn] (sodC) (Francisella tularensis subsp. holarctica (strain LVS)).